We begin with the raw amino-acid sequence, 137 residues long: Probable 4-amino-4-deoxy-L-arabinose-phosphoundecaprenol flippase subunit ArnF (137 aa).

Transmembrane regions (helical) follow at residues 43–63 (AIAV…FWLL), 74–94 (YSLL…LPFF), and 98–118 (FTVS…TINL).

It belongs to the ArnF family. As to quaternary structure, heterodimer of ArnE and ArnF.

It is found in the cell inner membrane. Its pathway is bacterial outer membrane biogenesis; lipopolysaccharide biosynthesis. Functionally, translocates 4-amino-4-deoxy-L-arabinose-phosphoundecaprenol (alpha-L-Ara4N-phosphoundecaprenol) from the cytoplasmic to the periplasmic side of the inner membrane. This Pseudomonas savastanoi pv. phaseolicola (strain 1448A / Race 6) (Pseudomonas syringae pv. phaseolicola (strain 1448A / Race 6)) protein is Probable 4-amino-4-deoxy-L-arabinose-phosphoundecaprenol flippase subunit ArnF.